Reading from the N-terminus, the 366-residue chain is DNA replication and repair protein RecF (366 aa).

30–37 (GRNAQGKT) lines the ATP pocket.

The protein belongs to the RecF family.

The protein resides in the cytoplasm. Its function is as follows. The RecF protein is involved in DNA metabolism; it is required for DNA replication and normal SOS inducibility. RecF binds preferentially to single-stranded, linear DNA. It also seems to bind ATP. In Streptococcus thermophilus (strain CNRZ 1066), this protein is DNA replication and repair protein RecF.